Reading from the N-terminus, the 322-residue chain is Lymphatic vessel endothelial hyaluronic acid receptor 1 (322 aa).

Residues 1–19 (MARCFSLVLLLTSIWTTRL) form the signal peptide. Residues 20–238 (LVQGSLRAEE…EAAGFGGVPT (219 aa)) lie on the Extracellular side of the membrane. The region spanning 40–130 (GITLVSKKAN…SRQFAAYCYN (91 aa)) is the Link domain. N-linked (GlcNAc...) asparagine glycosylation is present at N53. Cystine bridges form between C61/C128 and C85/C106. A glycan (N-linked (GlcNAc...) asparagine) is linked at N130. The chain crosses the membrane as a helical span at residues 239 to 259 (ALLVLALLFFGAAAGLGFCYV). Over 260-322 (KRYVKAFPFT…TTVRCLEAEV (63 aa)) the chain is Cytoplasmic. Basic and acidic residues predominate over residues 279–309 (ETKVVKEEKANDSNPNEESKKTDKNPEESKS). A disordered region spans residues 279–322 (ETKVVKEEKANDSNPNEESKKTDKNPEESKSPSKTTVRCLEAEV).

Homodimer; disulfide-linked. Interacts with PDGFB and IGFBP3. Forms a transient ternary complex with PDGFB and PDGFRB in TGN. In terms of processing, O-glycosylated. In terms of tissue distribution, mainly expressed in endothelial cells lining lymphatic vessels.

Its subcellular location is the cell membrane. In terms of biological role, ligand-specific transporter trafficking between intracellular organelles (TGN) and the plasma membrane. Plays a role in autocrine regulation of cell growth mediated by growth regulators containing cell surface retention sequence binding (CRS). May act as a hyaluronan (HA) transporter, either mediating its uptake for catabolism within lymphatic endothelial cells themselves, or its transport into the lumen of afferent lymphatic vessels for subsequent re-uptake and degradation in lymph nodes. Binds to pericelluar hyaluronan matrices deposited on the surface of leukocytes and facilitates cell adhesion and migration through lymphatic endothelium. This chain is Lymphatic vessel endothelial hyaluronic acid receptor 1 (LYVE1), found in Homo sapiens (Human).